A 277-amino-acid polypeptide reads, in one-letter code: Formamidopyrimidine-DNA glycosylase (277 aa).

Pro-2 acts as the Schiff-base intermediate with DNA in catalysis. Catalysis depends on Glu-3, which acts as the Proton donor. The Proton donor; for beta-elimination activity role is filled by Lys-58. Residues His-97, Arg-116, and Arg-158 each coordinate DNA. The FPG-type zinc-finger motif lies at 243–277 (NVYGRAGAPCPRCGRSIRQRRIAQRSTWYCPGCQR). Arg-267 functions as the Proton donor; for delta-elimination activity in the catalytic mechanism.

This sequence belongs to the FPG family. Monomer. Zn(2+) is required as a cofactor.

The enzyme catalyses Hydrolysis of DNA containing ring-opened 7-methylguanine residues, releasing 2,6-diamino-4-hydroxy-5-(N-methyl)formamidopyrimidine.. The catalysed reaction is 2'-deoxyribonucleotide-(2'-deoxyribose 5'-phosphate)-2'-deoxyribonucleotide-DNA = a 3'-end 2'-deoxyribonucleotide-(2,3-dehydro-2,3-deoxyribose 5'-phosphate)-DNA + a 5'-end 5'-phospho-2'-deoxyribonucleoside-DNA + H(+). Involved in base excision repair of DNA damaged by oxidation or by mutagenic agents. Acts as a DNA glycosylase that recognizes and removes damaged bases. Has a preference for oxidized purines, such as 7,8-dihydro-8-oxoguanine (8-oxoG). Has AP (apurinic/apyrimidinic) lyase activity and introduces nicks in the DNA strand. Cleaves the DNA backbone by beta-delta elimination to generate a single-strand break at the site of the removed base with both 3'- and 5'-phosphates. In Alkalilimnicola ehrlichii (strain ATCC BAA-1101 / DSM 17681 / MLHE-1), this protein is Formamidopyrimidine-DNA glycosylase.